Reading from the N-terminus, the 200-residue chain is NAD(P)H dehydrogenase (quinone) (200 aa).

Positions 7–199 (LAIVFYSSTG…RQVELTAKLL (193 aa)) constitute a Flavodoxin-like domain. Residues 13 to 18 (SSTGTG), 86 to 88 (TRF), 121 to 127 (SAQNVNG), and His-142 contribute to the FMN site.

This sequence belongs to the WrbA family. In terms of assembly, homotetramer. FMN serves as cofactor.

The catalysed reaction is a quinone + NADH + H(+) = a quinol + NAD(+). It catalyses the reaction a quinone + NADPH + H(+) = a quinol + NADP(+). The sequence is that of NAD(P)H dehydrogenase (quinone) from Deinococcus radiodurans (strain ATCC 13939 / DSM 20539 / JCM 16871 / CCUG 27074 / LMG 4051 / NBRC 15346 / NCIMB 9279 / VKM B-1422 / R1).